Reading from the N-terminus, the 299-residue chain is Nicotinate-nucleotide pyrophosphorylase [carboxylating] (299 aa).

Residues 8-12 (LLLPP) form an important for hexamer formation region. Quinolinate-binding positions include Arg102, 138–139 (RK), 160–161 (HR), Lys171, Glu201, Asp222, 248–250 (SGG), and Gly270.

The protein belongs to the NadC/ModD family. In terms of assembly, hexamer formed by 3 homodimers.

It carries out the reaction nicotinate beta-D-ribonucleotide + CO2 + diphosphate = quinolinate + 5-phospho-alpha-D-ribose 1-diphosphate + 2 H(+). Its pathway is cofactor biosynthesis; NAD(+) biosynthesis; nicotinate D-ribonucleotide from quinolinate: step 1/1. Functionally, involved in the catabolism of quinolinic acid (QA). This Sus scrofa (Pig) protein is Nicotinate-nucleotide pyrophosphorylase [carboxylating].